Reading from the N-terminus, the 322-residue chain is Protein mono-ADP-ribosyltransferase PARP16 (322 aa).

Residues 1–287 (MQPSGWAAAR…RASSQLSWFS (287 aa)) are Cytoplasmic-facing. Positions 5–91 (GWAAAREAAG…AWDLVSWILS (87 aa)) constitute a PARP alpha-helical domain. Aspartate 37 carries the ADP-ribosyl aspartic acid modification. Residue glutamate 70 is modified to ADP-ribosyl glutamic acid. A PARP catalytic domain is found at 94 to 279 (VLTIHSAGKA…VYSQKPPKRA (186 aa)). N6-(ADP-ribosyl)lysine is present on residues lysine 110 and lysine 137. Positions 152, 182, and 254 each coordinate NAD(+). The chain crosses the membrane as a helical span at residues 288–308 (SHWFTVMISLYLLLLLIVSVI). The Lumenal segment spans residues 309 to 322 (NSSAFQHFWNRAKR).

The protein belongs to the ARTD/PARP family. In terms of assembly, interacts with KPNB1. Post-translationally, auto-mono-ADP-ribosylated.

It localises to the endoplasmic reticulum membrane. It carries out the reaction L-aspartyl-[protein] + NAD(+) = 4-O-(ADP-D-ribosyl)-L-aspartyl-[protein] + nicotinamide. The enzyme catalyses L-glutamyl-[protein] + NAD(+) = 5-O-(ADP-D-ribosyl)-L-glutamyl-[protein] + nicotinamide. It catalyses the reaction L-lysyl-[protein] + NAD(+) = N(6)-(ADP-D-ribosyl)-L-lysyl-[protein] + nicotinamide + H(+). With respect to regulation, in absence of activation signal, PARP16 is autoinhibited by the PARP alpha-helical domain (also named HD region), which prevents effective NAD(+)-binding. Activity is highly stimulated by signals, which unfold the PARP alpha-helical domain, relieving autoinhibition. Functionally, intracellular mono-ADP-ribosyltransferase that plays a role in different processes, such as protein translation and unfolded protein response (UPR), through the mono-ADP-ribosylation of proteins involved in those processes. Acts as an inhibitor of protein translation by catalyzing mono-ADP-ribosylation of ribosomal subunits, such as RPL14 and RPS6, thereby inhibiting polysome assembly and mRNA loading. Mono-ADP-ribosylation of ribosomal subunits is promoted by NMNAT2. Involved in the unfolded protein response (UPR) by ADP-ribosylating and activating EIF2AK3 and ERN1, two important UPR effectors. May also mediate mono-ADP-ribosylation of karyopherin KPNB1 a nuclear import factor. May not modify proteins on arginine or cysteine residues compared to other mono-ADP-ribosyltransferases. The sequence is that of Protein mono-ADP-ribosyltransferase PARP16 from Homo sapiens (Human).